The primary structure comprises 355 residues: Peptide chain release factor 1 (355 aa).

The residue at position 232 (Gln232) is an N5-methylglutamine.

The protein belongs to the prokaryotic/mitochondrial release factor family. Methylated by PrmC. Methylation increases the termination efficiency of RF1.

It localises to the cytoplasm. Its function is as follows. Peptide chain release factor 1 directs the termination of translation in response to the peptide chain termination codons UAG and UAA. This Thermobifida fusca (strain YX) protein is Peptide chain release factor 1.